The following is a 188-amino-acid chain: Elongation factor P (188 aa).

This sequence belongs to the elongation factor P family.

Its subcellular location is the cytoplasm. Its pathway is protein biosynthesis; polypeptide chain elongation. Functionally, involved in peptide bond synthesis. Stimulates efficient translation and peptide-bond synthesis on native or reconstituted 70S ribosomes in vitro. Probably functions indirectly by altering the affinity of the ribosome for aminoacyl-tRNA, thus increasing their reactivity as acceptors for peptidyl transferase. This Phytoplasma mali (strain AT) protein is Elongation factor P.